We begin with the raw amino-acid sequence, 325 residues long: Helicase VP6-A (325 aa).

Disordered regions lie at residues 1-127 (MLLA…NGRR) and 174-230 (EGVA…EPAR). Basic and acidic residues-rich tracts occupy residues 8–18 (VIKRSSEELKQ), 32–54 (EGGK…KDGE), 61–79 (GQKE…DRRI), and 92–105 (PGER…RGDG). Position 106 (K106) interacts with ATP. Residues 106-122 (KVGGGGGDADAGVGATG) are compositionally biased toward gly residues. A compositionally biased stretch (basic and acidic residues) spans 175 to 229 (GVAEQTERSRDLRRKEKNGTHAKAVERGGRKQRKESHGDAQREGVEEEKTSEEPA).

The protein belongs to the orbivirus VP6 family. Homohexamer.

The protein localises to the virion. The enzyme catalyses ATP + H2O = ADP + phosphate + H(+). Functionally, ATP dependent RNA helicase essential for RNA packaging and viral transcription. Possesses ss- and dsRNA-binding capacity. The protein is Helicase VP6-A (Segment-9) of Bluetongue virus 13 (isolate USA) (BTV 13).